We begin with the raw amino-acid sequence, 59 residues long: Large ribosomal subunit protein uL30 (59 aa).

Belongs to the universal ribosomal protein uL30 family. As to quaternary structure, part of the 50S ribosomal subunit.

In Psychrobacter sp. (strain PRwf-1), this protein is Large ribosomal subunit protein uL30.